The primary structure comprises 373 residues: MTGWSCLVTGAGGFLGQRIIRLLVKEKELKEIRVLDKAFGPELREEFSKLQNKTKLTVLEGDILDEPFLKRACQDVSVIIHTACIIDVFGVTHRESIMNVNVKGTQLLLEACVQASVPVFIYTSSIEVAGPNSYKEIIQNGHEEEPLENTWPAPYPHSKKLAEKAVLAANGWNLKNGGTLYTCALRPMYIYGEGSRFLSASINEALNNNGILSSVGKFSTVNPVYVGNVAWAHILALRALQDPKKAPSIRGQFYYISDDTPHQSYDNLNYTLSKEFGLRLDSRWSFPLSLMYWIGFLLEIVSFLLRPIYTYRPPFNRHIVTLSNSVFTFSYKKAQRDLAYKPLYSWEEAKQKTVEWVGSLVDRHKETLKSKTQ.

NADP(+) contacts are provided by residues 10–15 (GAGGFL), Tyr-155, and Lys-159. The active-site Proton donor is the Lys-159. The chain crosses the membrane as a helical span at residues 288 to 308 (LSLMYWIGFLLEIVSFLLRPI).

It belongs to the 3-beta-HSD family. As to expression, placenta and skin. Predominantly expressed in mammary gland tissue.

The protein resides in the endoplasmic reticulum membrane. It localises to the mitochondrion membrane. The catalysed reaction is a 3beta-hydroxy-Delta(5)-steroid + NAD(+) = a 3-oxo-Delta(5)-steroid + NADH + H(+). It carries out the reaction pregnenolone + NAD(+) = pregn-5-ene-3,20-dione + NADH + H(+). It catalyses the reaction 3beta-hydroxyandrost-5-en-17-one + NAD(+) = androst-5-ene-3,17-dione + NADH + H(+). The enzyme catalyses androst-5-en-3beta,17beta-diol + NAD(+) = 17beta-hydroxy-androst-5-en-3-one + NADH + H(+). The catalysed reaction is a 3beta-hydroxysteroid + NADP(+) = a 3-oxosteroid + NADPH + H(+). It carries out the reaction 5alpha-androstane-3beta,17beta-diol + NADP(+) = 17beta-hydroxy-5alpha-androstan-3-one + NADPH + H(+). It catalyses the reaction 3beta-hydroxy-5alpha-androstan-17-one + NADP(+) = 5alpha-androstan-3,17-dione + NADPH + H(+). The enzyme catalyses a 3-oxo-Delta(5)-steroid = a 3-oxo-Delta(4)-steroid. The catalysed reaction is pregn-5-ene-3,20-dione = progesterone. It carries out the reaction androst-5-ene-3,17-dione = androst-4-ene-3,17-dione. It catalyses the reaction 17beta-hydroxy-androst-5-en-3-one = testosterone. The enzyme catalyses 5alpha-androstane-3beta,17beta-diol + NAD(+) = 17beta-hydroxy-5alpha-androstan-3-one + NADH + H(+). It participates in steroid hormone biosynthesis. It functions in the pathway steroid metabolism. Functionally, a bifunctional enzyme responsible for the oxidation and isomerization of 3beta-hydroxy-Delta(5)-steroid precursors to 3-oxo-Delta(4)-steroids, an essential step in steroid hormone biosynthesis. Specifically catalyzes the conversion of pregnenolone to progesterone, 17alpha-hydroxypregnenolone to 17alpha-hydroxyprogesterone, dehydroepiandrosterone (DHEA) to 4-androstenedione, and androstenediol to testosterone. Additionally, catalyzes the interconversion between 3beta-hydroxy and 3-oxo-5alpha-androstane steroids controlling the bioavalability of the active forms. Specifically converts dihydrotestosterone to its inactive form 5alpha-androstanediol, that does not bind androgen receptor/AR. Also converts androstanedione, a precursor of testosterone and estrone, to epiandrosterone. Expected to use NAD(+) as preferred electron donor for the 3beta-hydroxy-steroid dehydrogenase activity and NADPH for the 3-ketosteroid reductase activity. The sequence is that of 3 beta-hydroxysteroid dehydrogenase/Delta 5--&gt;4-isomerase type 1 from Homo sapiens (Human).